The sequence spans 428 residues: ATP-dependent RNA helicase RhlB (428 aa).

The short motif at 9 to 37 (KKFSDFALHPKVIEALDNKGFSNCTPIQA) is the Q motif element. The region spanning 40 to 219 (LPFTVEGRDV…FEQMNHAEYI (180 aa)) is the Helicase ATP-binding domain. Position 53–60 (53–60 (AQTGTGKT)) interacts with ATP. Positions 165-168 (DEAD) match the DEAD box motif. Residues 245–390 (RLLQTLLEEE…VSKYNSQALL (146 aa)) form the Helicase C-terminal domain. The disordered stretch occupies residues 392-428 (DLPAPKRRYRSRSGNHQRRNNLSHRNNTPRNNRKRSG). Residues 396–413 (PKRRYRSRSGNHQRRNNL) show a composition bias toward basic residues.

The protein belongs to the DEAD box helicase family. RhlB subfamily. In terms of assembly, component of the RNA degradosome, which is a multiprotein complex involved in RNA processing and mRNA degradation.

Its subcellular location is the cytoplasm. It carries out the reaction ATP + H2O = ADP + phosphate + H(+). In terms of biological role, DEAD-box RNA helicase involved in RNA degradation. Has RNA-dependent ATPase activity and unwinds double-stranded RNA. This Photorhabdus laumondii subsp. laumondii (strain DSM 15139 / CIP 105565 / TT01) (Photorhabdus luminescens subsp. laumondii) protein is ATP-dependent RNA helicase RhlB.